Reading from the N-terminus, the 399-residue chain is Organelle RRM domain-containing protein 1, chloroplastic (399 aa).

The N-terminal 52 residues, 1–52 (MDAARASLLLAGGLAVSTSTSAVATAAQTVSIPHLSPHTRRRRQRRFLRLAS), are a transit peptide targeting the chloroplast. Residues 295-373 (KRLFVTGLSF…WMIVVDVAKH (79 aa)) enclose the RRM domain. The segment at 377–399 (DRQPPYSASGRSNQVLRSRYHTG) is disordered.

The protein localises to the plastid. It is found in the chloroplast. Its function is as follows. Involved in C-to-U editing of chloroplastic RNA. Functions as major chloroplastic editing factor. Controls a majority of the chloroplastic editing sites. This is Organelle RRM domain-containing protein 1, chloroplastic from Oryza sativa subsp. japonica (Rice).